The following is a 60-amino-acid chain: UPF0434 protein Ssed_2824 (60 aa).

It belongs to the UPF0434 family.

This Shewanella sediminis (strain HAW-EB3) protein is UPF0434 protein Ssed_2824.